Here is a 235-residue protein sequence, read N- to C-terminus: Leucyl/phenylalanyl-tRNA--protein transferase (235 aa).

The protein belongs to the L/F-transferase family.

The protein localises to the cytoplasm. The enzyme catalyses N-terminal L-lysyl-[protein] + L-leucyl-tRNA(Leu) = N-terminal L-leucyl-L-lysyl-[protein] + tRNA(Leu) + H(+). It catalyses the reaction N-terminal L-arginyl-[protein] + L-leucyl-tRNA(Leu) = N-terminal L-leucyl-L-arginyl-[protein] + tRNA(Leu) + H(+). It carries out the reaction L-phenylalanyl-tRNA(Phe) + an N-terminal L-alpha-aminoacyl-[protein] = an N-terminal L-phenylalanyl-L-alpha-aminoacyl-[protein] + tRNA(Phe). Its function is as follows. Functions in the N-end rule pathway of protein degradation where it conjugates Leu, Phe and, less efficiently, Met from aminoacyl-tRNAs to the N-termini of proteins containing an N-terminal arginine or lysine. In Cellvibrio japonicus (strain Ueda107) (Pseudomonas fluorescens subsp. cellulosa), this protein is Leucyl/phenylalanyl-tRNA--protein transferase.